The following is a 135-amino-acid chain: Ribosome-binding factor A (135 aa).

Belongs to the RbfA family. Monomer. Binds 30S ribosomal subunits, but not 50S ribosomal subunits or 70S ribosomes.

Its subcellular location is the cytoplasm. One of several proteins that assist in the late maturation steps of the functional core of the 30S ribosomal subunit. Associates with free 30S ribosomal subunits (but not with 30S subunits that are part of 70S ribosomes or polysomes). Required for efficient processing of 16S rRNA. May interact with the 5'-terminal helix region of 16S rRNA. The protein is Ribosome-binding factor A of Novosphingobium aromaticivorans (strain ATCC 700278 / DSM 12444 / CCUG 56034 / CIP 105152 / NBRC 16084 / F199).